A 494-amino-acid chain; its full sequence is Flap endonuclease 1 (494 aa).

The N-domain stretch occupies residues 1–106 (MGIKGLIPFL…KTLEKRRQQR (106 aa)). Residue Asp-34 participates in Mg(2+) binding. DNA contacts are provided by Arg-47 and Arg-72. Positions 88, 160, 162, 181, and 183 each coordinate Mg(2+). The tract at residues 124-253 (SVKKLVGRTV…KTAYSLVKKY (130 aa)) is I-domain. DNA is bound at residue Glu-160. 2 residues coordinate DNA: Gly-231 and Asp-233. A Mg(2+)-binding site is contributed by Asp-233. An interaction with PCNA region spans residues 330–338 (IQTSLLSFL). Disordered stretches follow at residues 341–382 (PQHN…ESST) and 395–426 (LFCE…ENET). Basic and acidic residues predominate over residues 408–426 (DRGRVDKNEDLFKKSENET).

The protein belongs to the XPG/RAD2 endonuclease family. FEN1 subfamily. In terms of assembly, interacts with PCNA. Three molecules of FEN1 bind to one PCNA trimer with each molecule binding to one PCNA monomer. PCNA stimulates the nuclease activity without altering cleavage specificity. Mg(2+) is required as a cofactor. Phosphorylated. Phosphorylation upon DNA damage induces relocalization to the nuclear plasma.

Its subcellular location is the nucleus. The protein localises to the nucleolus. It is found in the nucleoplasm. It localises to the mitochondrion. Its function is as follows. Structure-specific nuclease with 5'-flap endonuclease and 5'-3' exonuclease activities involved in DNA replication and repair. During DNA replication, cleaves the 5'-overhanging flap structure that is generated by displacement synthesis when DNA polymerase encounters the 5'-end of a downstream Okazaki fragment. It enters the flap from the 5'-end and then tracks to cleave the flap base, leaving a nick for ligation. Also involved in the long patch base excision repair (LP-BER) pathway, by cleaving within the apurinic/apyrimidinic (AP) site-terminated flap. Acts as a genome stabilization factor that prevents flaps from equilibrating into structures that lead to duplications and deletions. Also possesses 5'-3' exonuclease activity on nicked or gapped double-stranded DNA, and exhibits RNase H activity. Also involved in replication and repair of rDNA and in repairing mitochondrial DNA. The sequence is that of Flap endonuclease 1 from Theileria parva (East coast fever infection agent).